A 624-amino-acid polypeptide reads, in one-letter code: uncharacterized protein (624 aa).

An N-terminal signal peptide occupies residues 1–29; the sequence is MRFHRQGTAATVGVLLIVLLGFCWKLSES. N-linked (GlcNAc...) asparagine glycosylation is found at asparagine 68, asparagine 150, asparagine 219, asparagine 366, asparagine 441, asparagine 447, asparagine 464, and asparagine 528. Positions 141–174 are disordered; that stretch reads LERRHGRFGNGTHGDHPKGPPPPPPPDEKDRGSQ.

Its subcellular location is the secreted. This is an uncharacterized protein from Saccharomyces cerevisiae (strain ATCC 204508 / S288c) (Baker's yeast).